The following is a 144-amino-acid chain: Ig heavy chain V region M167 (144 aa).

The first 19 residues, 1-19 (MKMWLNWVFLLTLLHGIQC), serve as a signal peptide directing secretion. In terms of domain architecture, Ig-like spans 20 to 133 (EVKVVESGGG…GNSYFGYFDV (114 aa)).

The sequence is that of Ig heavy chain V region M167 from Mus musculus (Mouse).